The chain runs to 567 residues: Protein phosphatase 1 regulatory inhibitor subunit 16B (567 aa).

A coiled-coil region spans residues 15-55 (EKVPTLERLRAAQKRRAQQLKKWAQYEQDLQHRKRKHERKR). A Phosphoserine modification is found at serine 69. 4 ANK repeats span residues 100-129 (DGLT…NVNA), 133-162 (ELWT…DLLA), 228-257 (QGAT…RVDV), and 261-290 (DGWE…SLSA). Residues serine 333, serine 337, and serine 350 each carry the phosphoserine modification. Residues 378–403 (RTSTYNGDIRETRTDQENKDPNPRLE) are disordered. Basic and acidic residues predominate over residues 385 to 403 (DIRETRTDQENKDPNPRLE). Serine 476 is subject to Phosphoserine. Polar residues predominate over residues 504 to 515 (SSMARTGESSSE). The tract at residues 504–525 (SSMARTGESSSEGKAPLIGGRT) is disordered. An ANK 5 repeat occupies 530–559 (SNGTSVYYTVTSGDPPLLKFKAPIEEMEEK). Cysteine 563 is lipidated: S-palmitoyl cysteine. Cysteine 564 bears the Cysteine methyl ester mark. Cysteine 564 carries S-farnesyl cysteine lipidation. Residues 565–567 (RIS) constitute a propeptide, removed in mature form.

In terms of assembly, interacts with PPP1CA, PPP1CB and MSN. Interacts (via its fourth ankyrin repeat) with the mature dimeric form of RPSA/LAMR1. Interacts with EEF1A1. Interacts with PTEN. Interacts with ECE1. In terms of processing, phosphorylated by PKA and, after PKA priming, by GSK3B. Phosphorylation by GSK3B reduces its association with PP1C and enhances PP1C activity. Dephosphorylation by its associated PP1C results in enhanced association with PP1C, but reduced PP1C activity.

Its subcellular location is the cell membrane. It is found in the nucleus. The protein localises to the cell projection. Regulator of protein phosphatase 1 (PP1) that acts as a positive regulator of pulmonary endothelial cell (EC) barrier function. Involved in the regulation of the PI3K/AKT signaling pathway, angiogenesis and endothelial cell proliferation. Regulates angiogenesis and endothelial cell proliferation through the control of ECE1 dephosphorylation, trafficking and activity. Protects the endothelial barrier from lipopolysaccharide (LPS)-induced vascular leakage. Involved in the regulation of endothelial cell filopodia extension. May be a downstream target for TGF-beta1 signaling cascade in endothelial cells. Involved in PKA-mediated moesin dephosphorylation which is important in EC barrier protection against thrombin stimulation. Promotes the interaction of PPP1CA with RPSA/LAMR1 and in turn facilitates the dephosphorylation of RPSA/LAMR1. Involved in the dephosphorylation of EEF1A1. The sequence is that of Protein phosphatase 1 regulatory inhibitor subunit 16B (PPP1R16B) from Homo sapiens (Human).